Consider the following 621-residue polypeptide: tRNA uridine 5-carboxymethylaminomethyl modification enzyme MnmG (621 aa).

9-14 (GGGHAG) serves as a coordination point for FAD. NAD(+) is bound at residue 270–284 (GPRYCPSIEDKIVKF).

It belongs to the MnmG family. As to quaternary structure, homodimer. Heterotetramer of two MnmE and two MnmG subunits. It depends on FAD as a cofactor.

Its subcellular location is the cytoplasm. Its function is as follows. NAD-binding protein involved in the addition of a carboxymethylaminomethyl (cmnm) group at the wobble position (U34) of certain tRNAs, forming tRNA-cmnm(5)s(2)U34. The protein is tRNA uridine 5-carboxymethylaminomethyl modification enzyme MnmG of Borreliella burgdorferi (strain ATCC 35210 / DSM 4680 / CIP 102532 / B31) (Borrelia burgdorferi).